The sequence spans 367 residues: MANQGDFPKRTETKKRPLHNIYGKEILRKRLEEENFSRTTLSFYRYVILENVQELRDQLYAEWEILGVLGRIYIAREGINAQLSIPSHNLDFFRKNLDSRNQFKDMQFKIAVEDDSKSFLKLDLKIKKKIVADGLNDDAFDVTNVGKHLSAEEFNLHMEDENSIVVDVRNHYESEIGHFENAILPQSDTFREELRILLELLNGKENHKILMYCTGGIRCEKASAWLKHHGYKDVNQLHGGIISYAHEVSQKGLESKFKGKNFVFDGRLQEAIGNEVISSCHQCGAKCDRHVNCENPGCHVLFIQCPSCSEKFEGCCTLECQNVLHLPKEKQKEIRKGKLNENRFFSKSKIRPKISELYHGILFKSSK.

The Rhodanese domain maps to Glu159–Leu253. Cys213 serves as the catalytic Cysteine persulfide intermediate.

It belongs to the TrhO family.

The enzyme catalyses uridine(34) in tRNA + AH2 + O2 = 5-hydroxyuridine(34) in tRNA + A + H2O. In terms of biological role, catalyzes oxygen-dependent 5-hydroxyuridine (ho5U) modification at position 34 in tRNAs. The protein is tRNA uridine(34) hydroxylase of Leptospira interrogans serogroup Icterohaemorrhagiae serovar Lai (strain 56601).